The chain runs to 671 residues: Major S-layer protein (671 aa).

The first 24 residues, 1–24 (MKRFAALSLAALMLLTVFASAASA), serve as a signal peptide directing secretion. Asparagine 36, asparagine 70, asparagine 116, and asparagine 350 each carry an N-linked (GlcNAc...) asparagine glycan. Residues 594-650 (GEEVSGEEETPEETPTGEVTETEGEEETPTEVTETPTEGEPAPEETETTESEGTTPG) form a disordered region. Acidic residues predominate over residues 613–622 (TETEGEEETP). Low complexity predominate over residues 623 to 633 (TEVTETPTEGE). Residues 634 to 643 (PAPEETETTE) are compositionally biased toward acidic residues. Residues 647 to 667 (TTPGFGFMFGLVGLLAVVYLV) traverse the membrane as a helical segment.

It belongs to the Methanosarcinales S-layer protein family. In terms of processing, glycosylated.

Its subcellular location is the secreted. The protein resides in the cell wall. The protein localises to the S-layer. It localises to the cell membrane. Its function is as follows. S-layer protein. The S-layer is a paracrystalline mono-layered assembly of proteins which coat the surface of the cell. This chain is Major S-layer protein, found in Methanosarcina acetivorans (strain ATCC 35395 / DSM 2834 / JCM 12185 / C2A).